The primary structure comprises 396 residues: Inositol polyphosphate 1-phosphatase (396 aa).

Aspartate 54 is a Li(+) binding site. Glutamate 79 serves as a coordination point for Mg(2+). Glutamate 80 is a binding site for Li(+). Mg(2+) contacts are provided by aspartate 153 and isoleucine 155. 1D-myo-inositol 1,4-bisphosphate-binding residues include aspartate 156, serine 157, threonine 158, serine 264, lysine 266, glycine 286, alanine 287, lysine 290, and threonine 308. Aspartate 313 contributes to the Mg(2+) binding site. At serine 314 the chain carries Phosphoserine.

This sequence belongs to the inositol monophosphatase superfamily. In terms of assembly, monomer. Requires Mg(2+) as cofactor.

The enzyme catalyses 1D-myo-inositol 1,4-bisphosphate + H2O = 1D-myo-inositol 4-phosphate + phosphate. The catalysed reaction is 1D-myo-inositol 1,3,4-trisphosphate + H2O = 1D-myo-inositol 3,4-bisphosphate + phosphate. It functions in the pathway signal transduction; phosphatidylinositol signaling pathway. Its activity is regulated as follows. Inhibited by Li(+). Functionally, mg(2+)-dependent phosphatase that catalyzes the hydrolysis of the 1-position phosphate from inositol 1,4-bisphosphate and inositol 1,3,4-trisphosphate and participates in inositol phosphate metabolism. This is Inositol polyphosphate 1-phosphatase from Mus musculus (Mouse).